The chain runs to 160 residues: ATP synthase subunit b 3 (160 aa).

The chain crosses the membrane as a helical span at residues 5 to 25 (PTFWVLVAFVLFVAAVWRIAA).

Belongs to the ATPase B chain family. F-type ATPases have 2 components, F(1) - the catalytic core - and F(0) - the membrane proton channel. F(1) has five subunits: alpha(3), beta(3), gamma(1), delta(1), epsilon(1). F(0) has three main subunits: a(1), b(2) and c(10-14). The alpha and beta chains form an alternating ring which encloses part of the gamma chain. F(1) is attached to F(0) by a central stalk formed by the gamma and epsilon chains, while a peripheral stalk is formed by the delta and b chains.

It is found in the cell inner membrane. Functionally, f(1)F(0) ATP synthase produces ATP from ADP in the presence of a proton or sodium gradient. F-type ATPases consist of two structural domains, F(1) containing the extramembraneous catalytic core and F(0) containing the membrane proton channel, linked together by a central stalk and a peripheral stalk. During catalysis, ATP synthesis in the catalytic domain of F(1) is coupled via a rotary mechanism of the central stalk subunits to proton translocation. Component of the F(0) channel, it forms part of the peripheral stalk, linking F(1) to F(0). This Rhodospirillum centenum (strain ATCC 51521 / SW) protein is ATP synthase subunit b 3.